The following is a 408-amino-acid chain: Potassium channel subfamily K member 13 (408 aa).

At 1-19 the chain is on the cytoplasmic side; that stretch reads MAGRGFSWGPGHLNEDNAR. A helical membrane pass occupies residues 20–40; the sequence is FLLLAALIVLYLLGGAAVFSA. Residues asparagine 59 and asparagine 65 are each glycosylated (N-linked (GlcNAc...) asparagine). The segment at residues 95–115 is an intramembrane region (pore-forming); it reads WDFTGAFYFVGTVVSTIGFGM. K(+) contacts are provided by threonine 110, isoleucine 111, and glycine 112. The tract at residues 110–115 is selectivity filter 1; that stretch reads TIGFGM. The helical transmembrane segment at 125–145 threads the bilayer; it reads IFLIFYGLVGCSSTILFFNLF. At 146–193 the chain is on the cytoplasmic side; it reads LERLITIIAYIMKSCHQRQLRRRGALPQESLKDAGQCEVDSLAGWKPS. A helical transmembrane segment spans residues 194–214; that stretch reads VYYVMLILCTASILISCCASA. The pore-forming intramembrane region spans 224–244; it reads YFDSLYFCFVAFSTIGFGDLV. K(+) contacts are provided by threonine 237, isoleucine 238, glycine 239, and phenylalanine 240. Residues 237–242 are selectivity filter 2; that stretch reads TIGFGD. Residues 263-283 form a helical membrane-spanning segment; the sequence is VFILMGVCCIYSLFNVISILI. The Cytoplasmic portion of the chain corresponds to 284-408; it reads KQSLNWILRK…NRLAETSGDR (125 aa).

It belongs to the two pore domain potassium channel (TC 1.A.1.8) family. Homodimer. Heterodimer with KCNK12. As to expression, expressed in microglia (at protein level).

It localises to the cell membrane. It carries out the reaction K(+)(in) = K(+)(out). The channel conductance is activated by arachidonic acid and inhibited by Ba(2+) ions, volatile anesthetics such as halothane and antiarrhythmic drugs mexiletine and lidocaine. Insensitive to extracellular pH change. Its function is as follows. K(+) channel that conducts outward rectifying tonic currents potentiated by purinergic signals. Homo- and heterodimerizes to form functional channels with distinct regulatory and gating properties. Contributes most of K(+) currents at the plasma membrane of resting microglia. Maintains a depolarized membrane potential required for proper ramified microglia morphology and phagocytosis, selectively mediating microglial pruning of presynaptic compartments at hippocampal excitatory synapses. Upon local release of ATP caused by neuronal injury or infection, it is potentiated by P2RY12 and P2RX7 receptor signaling and contributes to ATP-triggered K(+) efflux underlying microglial NLRP3 inflammasome assembly and IL1B release. This is Potassium channel subfamily K member 13 from Homo sapiens (Human).